We begin with the raw amino-acid sequence, 150 residues long: MPAPILDIFVDGACKGNPGIGGWGVLMRYGQHEKVLMGAQWHTTNNRMELTAAIEALKAIKRPCPILISTDSVYVKNGITHWLPVWKKNNWRNASKKPIKNIELWQALDQLNQRYEIEWRWVKGHAGNPGNEIADELANRAIESLRQKTS.

Residues 2–143 form the RNase H type-1 domain; it reads PAPILDIFVD…ADELANRAIE (142 aa). Aspartate 11, glutamate 49, aspartate 71, and aspartate 135 together coordinate Mg(2+).

It belongs to the RNase H family. Monomer. Requires Mg(2+) as cofactor.

Its subcellular location is the cytoplasm. It carries out the reaction Endonucleolytic cleavage to 5'-phosphomonoester.. Endonuclease that specifically degrades the RNA of RNA-DNA hybrids. This is Ribonuclease H from Dichelobacter nodosus (strain VCS1703A).